Here is a 474-residue protein sequence, read N- to C-terminus: Sporulation-specific protein 6 (474 aa).

In terms of domain architecture, BRCT spans 125 to 178 (RLAFPNFIFYFDNVDEEIKRRVTQKINNLGAKVATLFTFEVTHFITTRTTDPEM). The DBF4-type zinc-finger motif lies at 421–470 (IETKSGYCENCCERYKDLERHLGGKHHRRFAEKDENFQGLDDLFLLIRRP). Residues cysteine 428, cysteine 431, histidine 441, and histidine 447 each contribute to the Zn(2+) site.

It localises to the nucleus. Its function is as follows. May act as a kinase regulator. Essential for progression of meiosis II and sporulation. The protein is Sporulation-specific protein 6 (spo6) of Schizosaccharomyces pombe (strain 972 / ATCC 24843) (Fission yeast).